Consider the following 219-residue polypeptide: N-(5'-phosphoribosyl)anthranilate isomerase (219 aa).

The protein belongs to the TrpF family.

The enzyme catalyses N-(5-phospho-beta-D-ribosyl)anthranilate = 1-(2-carboxyphenylamino)-1-deoxy-D-ribulose 5-phosphate. It participates in amino-acid biosynthesis; L-tryptophan biosynthesis; L-tryptophan from chorismate: step 3/5. This Mesorhizobium japonicum (strain LMG 29417 / CECT 9101 / MAFF 303099) (Mesorhizobium loti (strain MAFF 303099)) protein is N-(5'-phosphoribosyl)anthranilate isomerase.